A 155-amino-acid chain; its full sequence is Transcription antitermination protein NusB (155 aa).

This sequence belongs to the NusB family.

Involved in transcription antitermination. Required for transcription of ribosomal RNA (rRNA) genes. Binds specifically to the boxA antiterminator sequence of the ribosomal RNA (rrn) operons. This is Transcription antitermination protein NusB from Vibrio parahaemolyticus serotype O3:K6 (strain RIMD 2210633).